Consider the following 192-residue polypeptide: Adenylate kinase (192 aa).

10–15 (GAGKGT) contributes to the ATP binding site. The NMP stretch occupies residues 30 to 59 (STGDMLREVIRRETEIGKKAKAMINAGTLV). AMP contacts are provided by residues Thr31, Arg36, 57–59 (TLV), 85–88 (GYPR), and Gln92. Residues 126–142 (KRVQETIIAGGQVRSDD) are LID. Arg127 provides a ligand contact to ATP. Arg139 and Arg150 together coordinate AMP. Residue Ile178 coordinates ATP.

This sequence belongs to the adenylate kinase family. Monomer.

The protein localises to the cytoplasm. It carries out the reaction AMP + ATP = 2 ADP. Its pathway is purine metabolism; AMP biosynthesis via salvage pathway; AMP from ADP: step 1/1. Functionally, catalyzes the reversible transfer of the terminal phosphate group between ATP and AMP. Plays an important role in cellular energy homeostasis and in adenine nucleotide metabolism. This Bartonella henselae (strain ATCC 49882 / DSM 28221 / CCUG 30454 / Houston 1) (Rochalimaea henselae) protein is Adenylate kinase.